The following is a 120-amino-acid chain: Aspartate 1-decarboxylase (120 aa).

The active-site Schiff-base intermediate with substrate; via pyruvic acid is Ser-25. Ser-25 is modified (pyruvic acid (Ser)). Thr-57 contributes to the substrate binding site. The active-site Proton donor is Tyr-58. 72–74 (GAA) provides a ligand contact to substrate.

It belongs to the PanD family. Heterooctamer of four alpha and four beta subunits. Pyruvate serves as cofactor. Is synthesized initially as an inactive proenzyme, which is activated by self-cleavage at a specific serine bond to produce a beta-subunit with a hydroxyl group at its C-terminus and an alpha-subunit with a pyruvoyl group at its N-terminus.

It is found in the cytoplasm. It catalyses the reaction L-aspartate + H(+) = beta-alanine + CO2. The protein operates within cofactor biosynthesis; (R)-pantothenate biosynthesis; beta-alanine from L-aspartate: step 1/1. Functionally, catalyzes the pyruvoyl-dependent decarboxylation of aspartate to produce beta-alanine. This Helicobacter hepaticus (strain ATCC 51449 / 3B1) protein is Aspartate 1-decarboxylase.